The following is a 330-amino-acid chain: tRNA U34 carboxymethyltransferase (330 aa).

Carboxy-S-adenosyl-L-methionine is bound by residues Lys91, Trp105, Lys110, Gly130, 152 to 154, 181 to 182, Met196, Tyr200, and Arg315; these read DPS and IE.

It belongs to the class I-like SAM-binding methyltransferase superfamily. CmoB family. As to quaternary structure, homotetramer.

The enzyme catalyses carboxy-S-adenosyl-L-methionine + 5-hydroxyuridine(34) in tRNA = 5-carboxymethoxyuridine(34) in tRNA + S-adenosyl-L-homocysteine + H(+). Its function is as follows. Catalyzes carboxymethyl transfer from carboxy-S-adenosyl-L-methionine (Cx-SAM) to 5-hydroxyuridine (ho5U) to form 5-carboxymethoxyuridine (cmo5U) at position 34 in tRNAs. The protein is tRNA U34 carboxymethyltransferase of Shewanella loihica (strain ATCC BAA-1088 / PV-4).